The primary structure comprises 378 residues: Anhydro-N-acetylmuramic acid kinase 2 (378 aa).

Position 14-22 (14-22) interacts with ATP; sequence GTVLDGNID.

It belongs to the anhydro-N-acetylmuramic acid kinase family.

It carries out the reaction 1,6-anhydro-N-acetyl-beta-muramate + ATP + H2O = N-acetyl-D-muramate 6-phosphate + ADP + H(+). The protein operates within amino-sugar metabolism; 1,6-anhydro-N-acetylmuramate degradation. Its pathway is cell wall biogenesis; peptidoglycan recycling. Catalyzes the specific phosphorylation of 1,6-anhydro-N-acetylmuramic acid (anhMurNAc) with the simultaneous cleavage of the 1,6-anhydro ring, generating MurNAc-6-P. Is required for the utilization of anhMurNAc either imported from the medium or derived from its own cell wall murein, and thus plays a role in cell wall recycling. This is Anhydro-N-acetylmuramic acid kinase 2 from Jannaschia sp. (strain CCS1).